A 333-amino-acid polypeptide reads, in one-letter code: L-lactate dehydrogenase A chain (333 aa).

Position 2 is an N-acetylalanine (Ala2). NAD(+) contacts are provided by residues 30-58 and Arg100; that span reads GAVG…MEDK. 3 residues coordinate substrate: Arg107, Asn139, and Arg170. NAD(+) is bound at residue Asn139. The active-site Proton acceptor is His194. Residue Thr249 coordinates substrate.

The protein belongs to the LDH/MDH superfamily. LDH family. As to quaternary structure, homotetramer.

The protein localises to the cytoplasm. The catalysed reaction is (S)-lactate + NAD(+) = pyruvate + NADH + H(+). It participates in fermentation; pyruvate fermentation to lactate; (S)-lactate from pyruvate: step 1/1. Interconverts simultaneously and stereospecifically pyruvate and lactate with concomitant interconversion of NADH and NAD(+). The chain is L-lactate dehydrogenase A chain (ldha) from Squalus acanthias (Spiny dogfish).